The following is a 190-amino-acid chain: MSESSSVPTEREQLLNRLATLAYRRGDFTLASGRKSEHYVNCKPVSLSGSGLALISRAMLTHVEADARAVAGLTLGADPLVSGVAMAAADQSRELDALIVRKEAKGHGTGAWLEGPLPAPGTLITVLEDVVTTGGSSLKAVRQLRDAGYKVTRVVTIVDREEGGDAAMAADNLELISLYKLSEIAAFVPA.

5-phospho-alpha-D-ribose 1-diphosphate is bound by residues R101, K102, K105, H107, and 128 to 136 (EDVVTTGGS). T132 and R160 together coordinate orotate.

It belongs to the purine/pyrimidine phosphoribosyltransferase family. PyrE subfamily. As to quaternary structure, homodimer. The cofactor is Mg(2+).

The catalysed reaction is orotidine 5'-phosphate + diphosphate = orotate + 5-phospho-alpha-D-ribose 1-diphosphate. Its pathway is pyrimidine metabolism; UMP biosynthesis via de novo pathway; UMP from orotate: step 1/2. Functionally, catalyzes the transfer of a ribosyl phosphate group from 5-phosphoribose 1-diphosphate to orotate, leading to the formation of orotidine monophosphate (OMP). The chain is Orotate phosphoribosyltransferase from Synechococcus sp. (strain CC9605).